We begin with the raw amino-acid sequence, 388 residues long: Succinate--CoA ligase [ADP-forming] subunit beta (388 aa).

In terms of domain architecture, ATP-grasp spans 9 to 244; that stretch reads KQLFAEFGLP…PSQEDEREAH (236 aa). ATP is bound by residues lysine 46, 53-55, glutamate 99, serine 102, and glutamate 107; that span reads GRG. Asparagine 199 and aspartate 213 together coordinate Mg(2+). Substrate contacts are provided by residues asparagine 264 and 321 to 323; that span reads GIV.

Belongs to the succinate/malate CoA ligase beta subunit family. Heterotetramer of two alpha and two beta subunits. Requires Mg(2+) as cofactor.

It catalyses the reaction succinate + ATP + CoA = succinyl-CoA + ADP + phosphate. It carries out the reaction GTP + succinate + CoA = succinyl-CoA + GDP + phosphate. It participates in carbohydrate metabolism; tricarboxylic acid cycle; succinate from succinyl-CoA (ligase route): step 1/1. Its function is as follows. Succinyl-CoA synthetase functions in the citric acid cycle (TCA), coupling the hydrolysis of succinyl-CoA to the synthesis of either ATP or GTP and thus represents the only step of substrate-level phosphorylation in the TCA. The beta subunit provides nucleotide specificity of the enzyme and binds the substrate succinate, while the binding sites for coenzyme A and phosphate are found in the alpha subunit. In Aliivibrio fischeri (strain ATCC 700601 / ES114) (Vibrio fischeri), this protein is Succinate--CoA ligase [ADP-forming] subunit beta.